Consider the following 570-residue polypeptide: Aspartyl aminopeptidase (570 aa).

A Zn(2+)-binding site is contributed by histidine 86. Histidine 160 contacts substrate. Aspartate 324 contributes to the Zn(2+) binding site. Glutamate 379 provides a ligand contact to substrate. Residues glutamate 380 and aspartate 434 each coordinate Zn(2+). 4 residues coordinate substrate: aspartate 434, histidine 437, lysine 462, and tyrosine 469. A Zn(2+)-binding site is contributed by histidine 534.

This sequence belongs to the peptidase M18 family. In terms of assembly, homododecamer composed of homodimers and homotrimers that assemble into a tetrahedron shape to create a central tunnel containing the active sites. Homooctamer. Requires Zn(2+) as cofactor.

It is found in the cytoplasm. It catalyses the reaction Release of an N-terminal aspartate or glutamate from a peptide, with a preference for aspartate.. With respect to regulation, activated by Co(2+). Inhibited by high concentrations (&gt;1mM) of Zn(2+). Aminopeptidase which specifically catalyzes the removal of glutamic acid or aspartic acid residues from the N-terminus of peptides. May play a role in the final step of host hemoglobin catabolism, by cleaving hemoglobin-derived oligopeptides in the cytoplasm. The chain is Aspartyl aminopeptidase from Plasmodium falciparum (isolate 3D7).